The sequence spans 150 residues: 3-hydroxyacyl-[acyl-carrier-protein] dehydratase FabZ (150 aa).

His-54 is an active-site residue.

The protein belongs to the thioester dehydratase family. FabZ subfamily.

It is found in the cytoplasm. The catalysed reaction is a (3R)-hydroxyacyl-[ACP] = a (2E)-enoyl-[ACP] + H2O. Functionally, involved in unsaturated fatty acids biosynthesis. Catalyzes the dehydration of short chain beta-hydroxyacyl-ACPs and long chain saturated and unsaturated beta-hydroxyacyl-ACPs. This Vibrio vulnificus (strain CMCP6) protein is 3-hydroxyacyl-[acyl-carrier-protein] dehydratase FabZ.